The sequence spans 824 residues: Translation initiation factor IF-2 (824 aa).

Disordered regions lie at residues 1–32 and 45–232; these read MSDT…GRTK and VPKA…MGGQ. A compositionally biased stretch (low complexity) spans 45 to 57; the sequence is VPKAGATTSAGGK. Basic and acidic residues predominate over residues 86 to 144; the sequence is KAREAEEEAARIAEEKARAEERERRRAEQEERERAEREREESLKAKAEEDKRRKDEAEA. Low complexity predominate over residues 145 to 167; sequence AAKAAAAPAAEPVVQRPAAKAAP. Residues 170–193 show a composition bias toward basic and acidic residues; it reads APRKQQDRDRDNKRGGKGNDDSRR. Residues 321–489 enclose the tr-type G domain; sequence TRPPVVTIMG…AIALQAEILE (169 aa). The interval 330–337 is G1; it reads GHVDHGKT. 330 to 337 contacts GTP; the sequence is GHVDHGKT. The segment at 355-359 is G2; sequence GITQH. A G3 region spans residues 377-380; that stretch reads DTPG. Residues 377-381 and 431-434 each bind GTP; these read DTPGH and NKID. The interval 431–434 is G4; it reads NKID. The interval 467-469 is G5; it reads SAI.

Belongs to the TRAFAC class translation factor GTPase superfamily. Classic translation factor GTPase family. IF-2 subfamily.

It localises to the cytoplasm. Functionally, one of the essential components for the initiation of protein synthesis. Protects formylmethionyl-tRNA from spontaneous hydrolysis and promotes its binding to the 30S ribosomal subunits. Also involved in the hydrolysis of GTP during the formation of the 70S ribosomal complex. This is Translation initiation factor IF-2 from Roseobacter denitrificans (strain ATCC 33942 / OCh 114) (Erythrobacter sp. (strain OCh 114)).